A 209-amino-acid polypeptide reads, in one-letter code: Large ribosomal subunit protein uL3 (209 aa).

Residues 141-163 (RAVGSMGASSDPSRTFKNKRMPG) form a disordered region.

This sequence belongs to the universal ribosomal protein uL3 family. Part of the 50S ribosomal subunit. Forms a cluster with proteins L14 and L19.

Its function is as follows. One of the primary rRNA binding proteins, it binds directly near the 3'-end of the 23S rRNA, where it nucleates assembly of the 50S subunit. This chain is Large ribosomal subunit protein uL3, found in Clostridium botulinum (strain Kyoto / Type A2).